We begin with the raw amino-acid sequence, 196 residues long: Pyridoxal 5'-phosphate synthase subunit PdxT (196 aa).

L-glutamine is bound at residue 47-49 (GES). The active-site Nucleophile is cysteine 79. L-glutamine contacts are provided by residues arginine 106 and 134–135 (IR). Residues histidine 170 and glutamate 172 each act as charge relay system in the active site.

It belongs to the glutaminase PdxT/SNO family. In terms of assembly, in the presence of PdxS, forms a dodecamer of heterodimers. Only shows activity in the heterodimer.

It catalyses the reaction aldehydo-D-ribose 5-phosphate + D-glyceraldehyde 3-phosphate + L-glutamine = pyridoxal 5'-phosphate + L-glutamate + phosphate + 3 H2O + H(+). The enzyme catalyses L-glutamine + H2O = L-glutamate + NH4(+). It functions in the pathway cofactor biosynthesis; pyridoxal 5'-phosphate biosynthesis. In terms of biological role, catalyzes the hydrolysis of glutamine to glutamate and ammonia as part of the biosynthesis of pyridoxal 5'-phosphate. The resulting ammonia molecule is channeled to the active site of PdxS. The sequence is that of Pyridoxal 5'-phosphate synthase subunit PdxT from Bacillus pumilus (strain SAFR-032).